We begin with the raw amino-acid sequence, 415 residues long: Gamma-glutamyl phosphate reductase (415 aa).

This sequence belongs to the gamma-glutamyl phosphate reductase family.

It localises to the cytoplasm. The catalysed reaction is L-glutamate 5-semialdehyde + phosphate + NADP(+) = L-glutamyl 5-phosphate + NADPH + H(+). It functions in the pathway amino-acid biosynthesis; L-proline biosynthesis; L-glutamate 5-semialdehyde from L-glutamate: step 2/2. Catalyzes the NADPH-dependent reduction of L-glutamate 5-phosphate into L-glutamate 5-semialdehyde and phosphate. The product spontaneously undergoes cyclization to form 1-pyrroline-5-carboxylate. This is Gamma-glutamyl phosphate reductase from Dictyoglomus turgidum (strain DSM 6724 / Z-1310).